Reading from the N-terminus, the 343-residue chain is Glucokinase (343 aa).

18 to 23 (GDIGGT) provides a ligand contact to ATP.

This sequence belongs to the bacterial glucokinase family.

The protein localises to the cytoplasm. The enzyme catalyses D-glucose + ATP = D-glucose 6-phosphate + ADP + H(+). The sequence is that of Glucokinase from Brucella suis biovar 1 (strain 1330).